A 295-amino-acid chain; its full sequence is 33 kDa chaperonin (295 aa).

2 cysteine pairs are disulfide-bonded: C237–C239 and C270–C273.

Belongs to the HSP33 family. Under oxidizing conditions two disulfide bonds are formed involving the reactive cysteines. Under reducing conditions zinc is bound to the reactive cysteines and the protein is inactive.

It localises to the cytoplasm. In terms of biological role, redox regulated molecular chaperone. Protects both thermally unfolding and oxidatively damaged proteins from irreversible aggregation. Plays an important role in the bacterial defense system toward oxidative stress. This chain is 33 kDa chaperonin, found in Shouchella clausii (strain KSM-K16) (Alkalihalobacillus clausii).